A 246-amino-acid polypeptide reads, in one-letter code: Large ribosomal subunit protein uL30-like 1 (246 aa).

Phosphoserine is present on Ser-54.

This sequence belongs to the universal ribosomal protein uL30 family.

This chain is Large ribosomal subunit protein uL30-like 1 (Rpl7l1), found in Mus musculus (Mouse).